The sequence spans 760 residues: Formate acetyltransferase 1 (760 aa).

The PFL domain maps to 3–625; it reads ELNEKLATAW…KTGNTPDGRR (623 aa). At K63 the chain carries N6-acetyllysine; alternate. K63 carries the N6-succinyllysine; alternate modification. Position 107 is an N6-succinyllysine (K107). N6-acetyllysine; alternate is present on K117. K117 is subject to N6-succinyllysine; alternate. K124 carries the post-translational modification N6-succinyllysine. Residue K195 is modified to N6-acetyllysine; alternate. N6-succinyllysine; alternate is present on K195. C419 functions as the S-acetylcysteine intermediate in the catalytic mechanism. The Cysteine radical intermediate role is filled by C420. Residue K454 is modified to N6-acetyllysine; alternate. K454 is modified (N6-succinyllysine; alternate). K467 is modified (N6-succinyllysine). K541 and K591 each carry N6-acetyllysine. Residues 632–760 form the Glycine radical domain; that stretch reads PGANPMHGRD…VITRTFTQSM (129 aa). The residue at position 654 (K654) is an N6-succinyllysine. Position 735 is a glycine radical (G735).

The protein belongs to the glycyl radical enzyme (GRE) family. PFL subfamily. Homodimer. Interacts specifically with FocA.

It is found in the cytoplasm. It carries out the reaction formate + acetyl-CoA = pyruvate + CoA. Its pathway is fermentation; pyruvate fermentation; formate from pyruvate: step 1/1. Functionally, catalyzes the conversion of pyruvate to formate and acetyl-CoA. In addition, may be involved in the control of the activity of the formate channel FocA, via direct interaction with FocA. The chain is Formate acetyltransferase 1 (pflB) from Escherichia coli (strain K12).